The sequence spans 76 residues: uncharacterized protein (76 aa).

It to M.jannaschii MJ0857 N-terminal region.

This is an uncharacterized protein from Methanocaldococcus jannaschii (strain ATCC 43067 / DSM 2661 / JAL-1 / JCM 10045 / NBRC 100440) (Methanococcus jannaschii).